The primary structure comprises 314 residues: Formimidoylglutamase (314 aa).

Residues His127, Asp151, His153, Asp155, Asp239, and Asp241 each contribute to the Mn(2+) site.

Belongs to the arginase family. Mn(2+) is required as a cofactor.

It carries out the reaction N-formimidoyl-L-glutamate + H2O = formamide + L-glutamate. Its pathway is amino-acid degradation; L-histidine degradation into L-glutamate; L-glutamate from N-formimidoyl-L-glutamate (hydrolase route): step 1/1. Functionally, catalyzes the conversion of N-formimidoyl-L-glutamate to L-glutamate and formamide. This chain is Formimidoylglutamase, found in Corynebacterium efficiens (strain DSM 44549 / YS-314 / AJ 12310 / JCM 11189 / NBRC 100395).